Here is a 288-residue protein sequence, read N- to C-terminus: Acetyl-coenzyme A carboxylase carboxyl transferase subunit beta, chloroplastic (288 aa).

Residues 30–288 enclose the CoA carboxyltransferase N-terminal domain; it reads LWIKCFDCGL…QILSLHNHSK (259 aa). Zn(2+) contacts are provided by Cys34, Cys37, Cys53, and Cys56. Residues 34-56 form a C4-type zinc finger; the sequence is CFDCGLLMYSKVLKRNLKVCPQC.

Belongs to the AccD/PCCB family. Acetyl-CoA carboxylase is a heterohexamer composed of biotin carboxyl carrier protein, biotin carboxylase and 2 subunits each of ACCase subunit alpha and ACCase plastid-coded subunit beta (accD). It depends on Zn(2+) as a cofactor.

Its subcellular location is the plastid. The protein localises to the chloroplast stroma. The catalysed reaction is N(6)-carboxybiotinyl-L-lysyl-[protein] + acetyl-CoA = N(6)-biotinyl-L-lysyl-[protein] + malonyl-CoA. It functions in the pathway lipid metabolism; malonyl-CoA biosynthesis; malonyl-CoA from acetyl-CoA: step 1/1. Component of the acetyl coenzyme A carboxylase (ACC) complex. Biotin carboxylase (BC) catalyzes the carboxylation of biotin on its carrier protein (BCCP) and then the CO(2) group is transferred by the transcarboxylase to acetyl-CoA to form malonyl-CoA. The chain is Acetyl-coenzyme A carboxylase carboxyl transferase subunit beta, chloroplastic from Pyropia yezoensis (Susabi-nori).